The primary structure comprises 115 residues: Large ribosomal subunit protein bL19 (115 aa).

Belongs to the bacterial ribosomal protein bL19 family.

This protein is located at the 30S-50S ribosomal subunit interface and may play a role in the structure and function of the aminoacyl-tRNA binding site. The polypeptide is Large ribosomal subunit protein bL19 (Streptococcus pyogenes serotype M2 (strain MGAS10270)).